We begin with the raw amino-acid sequence, 416 residues long: Pre-mRNA-splicing factor slu-7 (416 aa).

Residues 1 to 34 (MPPPPPNRREQATAAPSSTDKSETGAGAARKEDN) are disordered. A CCHC-type zinc finger spans residues 95–112 (GACENCGAMGHKKKDCLE). 2 stretches are compositionally biased toward basic and acidic residues: residues 168-179 (RRALQGDQKTPD) and 188-213 (DDKSGFKYDEESDMGRDRATTKQSMR). Residues 168–213 (RRALQGDQKTPDGEGADGPEDDKSGFKYDEESDMGRDRATTKQSMR) form a disordered region.

This sequence belongs to the SLU7 family. In terms of assembly, associated with the spliceosome.

The protein resides in the nucleus. In terms of biological role, involved in pre-mRNA splicing. The protein is Pre-mRNA-splicing factor slu-7 (slu-7) of Neurospora crassa (strain ATCC 24698 / 74-OR23-1A / CBS 708.71 / DSM 1257 / FGSC 987).